Here is a 560-residue protein sequence, read N- to C-terminus: DNA ligase B (560 aa).

K124 (N6-AMP-lysine intermediate) is an active-site residue.

Belongs to the NAD-dependent DNA ligase family. LigB subfamily.

It carries out the reaction NAD(+) + (deoxyribonucleotide)n-3'-hydroxyl + 5'-phospho-(deoxyribonucleotide)m = (deoxyribonucleotide)n+m + AMP + beta-nicotinamide D-nucleotide.. In terms of biological role, catalyzes the formation of phosphodiester linkages between 5'-phosphoryl and 3'-hydroxyl groups in double-stranded DNA using NAD as a coenzyme and as the energy source for the reaction. This is DNA ligase B from Escherichia coli O81 (strain ED1a).